We begin with the raw amino-acid sequence, 180 residues long: Amnesiac neuropeptides (180 aa).

The signal sequence occupies residues 1-32 (MRSFCCCFYPAAVALHCVLLFYTFFLLFRASA). 2 propeptides span residues 33–35 (LRR) and 152–180 (GRRS…GEMR). Residues 155-180 (SVPRGQPKFSRENPRALSPSLLGEMR) are disordered.

In terms of tissue distribution, enriched expression in the embryonic and larval nervous systems. Strongly expressed in two large neurons that project over all the lobes of the mushroom bodies.

It localises to the secreted. Functionally, required for associative learning and memory in adults. Expression pattern suggests a modulatory role in memory formation. Controls neurotransmitter-mediated signaling pathways associated with the structure of the larval peripheral nerve. The polypeptide is Amnesiac neuropeptides (amn) (Drosophila melanogaster (Fruit fly)).